Consider the following 309-residue polypeptide: Glutaminase (309 aa).

Substrate contacts are provided by S65, N117, E162, N169, Y193, Y245, and V263.

It belongs to the glutaminase family. As to quaternary structure, homotetramer.

The catalysed reaction is L-glutamine + H2O = L-glutamate + NH4(+). This Clostridioides difficile (strain 630) (Peptoclostridium difficile) protein is Glutaminase.